Consider the following 443-residue polypeptide: Xaa-Pro dipeptidase (443 aa).

Mn(2+)-binding residues include Asp-246, Asp-257, His-339, Glu-384, and Glu-423.

The protein belongs to the peptidase M24B family. Bacterial-type prolidase subfamily. Mn(2+) is required as a cofactor.

It catalyses the reaction Xaa-L-Pro dipeptide + H2O = an L-alpha-amino acid + L-proline. Splits dipeptides with a prolyl residue in the C-terminal position. The sequence is that of Xaa-Pro dipeptidase from Shigella flexneri.